The following is a 273-amino-acid chain: Undecaprenyl-diphosphatase (273 aa).

7 helical membrane-spanning segments follow: residues 6-26 (SLLI…LPVS), 45-65 (AKTF…VMFW), 90-110 (LTLI…LVFH), 116-136 (LFNP…LIAA), 190-210 (YAAS…ATVL), 222-242 (ADIP…LIAI), and 252-272 (ISFI…YVVF).

The protein belongs to the UppP family.

The protein resides in the cell inner membrane. The enzyme catalyses di-trans,octa-cis-undecaprenyl diphosphate + H2O = di-trans,octa-cis-undecaprenyl phosphate + phosphate + H(+). Functionally, catalyzes the dephosphorylation of undecaprenyl diphosphate (UPP). Confers resistance to bacitracin. This Salmonella paratyphi C (strain RKS4594) protein is Undecaprenyl-diphosphatase.